The chain runs to 268 residues: Energy-coupling factor transporter transmembrane protein EcfT (268 aa).

5 helical membrane-spanning segments follow: residues 28–48 (FVFLFIILIFFCHSPLTYLWV), 63–83 (LWFLIKGLTPIFFFLIFTLMM), 107–127 (ILEGLYISLRLIGIVMIATIM), 152–172 (LPVHQLSMIMSIALRFIPTLM), and 248–268 (ISLTMIIPIAIILFVLKYSGV).

It belongs to the energy-coupling factor EcfT family. As to quaternary structure, forms a stable energy-coupling factor (ECF) transporter complex composed of 2 membrane-embedded substrate-binding proteins (S component), 2 ATP-binding proteins (A component) and 2 transmembrane proteins (T component). May be able to interact with more than 1 S component at a time.

The protein resides in the cell membrane. In terms of biological role, transmembrane (T) component of an energy-coupling factor (ECF) ABC-transporter complex. Unlike classic ABC transporters this ECF transporter provides the energy necessary to transport a number of different substrates. This is Energy-coupling factor transporter transmembrane protein EcfT from Staphylococcus aureus (strain 04-02981).